The chain runs to 521 residues: 4-cresol dehydrogenase [hydroxylating] flavoprotein subunit (521 aa).

Positions 54-268 (AAHAPSAAVT…VEIVDALRPL (215 aa)) constitute an FAD-binding PCMH-type domain. Residue Y384 is modified to O-8alpha-FAD tyrosine.

In terms of assembly, tetramer of two cytochrome subunits and two flavoprotein subunits. FAD serves as cofactor.

It catalyses the reaction 4-methylphenol + 4 oxidized [azurin] + H2O = 4 reduced [azurin] + 4-hydroxybenzaldehyde + 4 H(+). The protein operates within aromatic compound metabolism; p-cresol degradation. Functionally, catalyzes the azurin dependent hydroxylation of the methyl group of 4-methylphenol to form 4-hydroxybenzaldehyde. The sequence is that of 4-cresol dehydrogenase [hydroxylating] flavoprotein subunit (pchF) from Pseudomonas putida (Arthrobacter siderocapsulatus).